Reading from the N-terminus, the 88-residue chain is SPbeta prophage-derived protein BhlB (88 aa).

Transmembrane regions (helical) follow at residues 15–35 and 45–65; these read LLAI…AFII and DCLY…AAWF.

Belongs to the SPP1 holin family.

It localises to the cell membrane. Functionally, may be involved in the secretion of the autolysin BlyA. The sequence is that of SPbeta prophage-derived protein BhlB (bhlB) from Bacillus subtilis (strain 168).